The following is a 231-amino-acid chain: Ninja-family protein AFP3 (231 aa).

The span at alanine 83 to alanine 96 shows a compositional bias: basic residues. The tract at residues alanine 83–glycine 152 is disordered. Residues glutamine 130–glycine 152 are compositionally biased toward polar residues.

This sequence belongs to the Ninja family. As to quaternary structure, forms a heterodimer with AFP2. Interacts with ABI5/DPBF1, DPBF2, AREB3/DPBF3, EEL/DPBF4, ABF1, ABF3/DPBF5 and ABF4/AREB2.

Its subcellular location is the nucleus. Functionally, acts as a negative regulator of abscisic acid (ABA) response and stress responses. This chain is Ninja-family protein AFP3 (AFP3), found in Arabidopsis thaliana (Mouse-ear cress).